The following is a 302-amino-acid chain: Protein FdhE homolog (302 aa).

It belongs to the FdhE family.

The protein localises to the cytoplasm. In terms of biological role, necessary for formate dehydrogenase activity. The protein is Protein FdhE homolog of Haemophilus influenzae (strain PittGG).